The sequence spans 345 residues: S-adenosylmethionine:tRNA ribosyltransferase-isomerase (345 aa).

Belongs to the QueA family. As to quaternary structure, monomer.

It is found in the cytoplasm. The enzyme catalyses 7-aminomethyl-7-carbaguanosine(34) in tRNA + S-adenosyl-L-methionine = epoxyqueuosine(34) in tRNA + adenine + L-methionine + 2 H(+). It functions in the pathway tRNA modification; tRNA-queuosine biosynthesis. In terms of biological role, transfers and isomerizes the ribose moiety from AdoMet to the 7-aminomethyl group of 7-deazaguanine (preQ1-tRNA) to give epoxyqueuosine (oQ-tRNA). This Shewanella loihica (strain ATCC BAA-1088 / PV-4) protein is S-adenosylmethionine:tRNA ribosyltransferase-isomerase.